We begin with the raw amino-acid sequence, 573 residues long: Proline--tRNA ligase (573 aa).

It belongs to the class-II aminoacyl-tRNA synthetase family. ProS type 1 subfamily. Homodimer.

The protein localises to the cytoplasm. The catalysed reaction is tRNA(Pro) + L-proline + ATP = L-prolyl-tRNA(Pro) + AMP + diphosphate. Functionally, catalyzes the attachment of proline to tRNA(Pro) in a two-step reaction: proline is first activated by ATP to form Pro-AMP and then transferred to the acceptor end of tRNA(Pro). As ProRS can inadvertently accommodate and process non-cognate amino acids such as alanine and cysteine, to avoid such errors it has two additional distinct editing activities against alanine. One activity is designated as 'pretransfer' editing and involves the tRNA(Pro)-independent hydrolysis of activated Ala-AMP. The other activity is designated 'posttransfer' editing and involves deacylation of mischarged Ala-tRNA(Pro). The misacylated Cys-tRNA(Pro) is not edited by ProRS. The polypeptide is Proline--tRNA ligase (Cupriavidus necator (strain ATCC 17699 / DSM 428 / KCTC 22496 / NCIMB 10442 / H16 / Stanier 337) (Ralstonia eutropha)).